We begin with the raw amino-acid sequence, 472 residues long: FAD-dependent monooxygenase ltmM (472 aa).

Residues valine 7–glycine 27 traverse the membrane as a helical segment. Residues glutamate 34, glycine 48, and arginine 107 each coordinate FAD. Asparagine 186 carries N-linked (GlcNAc...) asparagine glycosylation. Residues aspartate 306 and alanine 319 each contribute to the FAD site. The chain crosses the membrane as a helical span at residues isoleucine 450–leucine 470.

Belongs to the paxM FAD-dependent monooxygenase family. It depends on FAD as a cofactor.

It localises to the membrane. It functions in the pathway secondary metabolite biosynthesis. FAD-dependent monooxygenase; part of the gene cluster that mediates the biosynthesis of lolitrems, indole-diterpene mycotoxins that are potent tremorgens in mammals, and are synthesized by clavicipitaceous fungal endophytes in association with their grass hosts. The geranylgeranyl diphosphate (GGPP) synthase ltmG is proposed to catalyze the first step in lolitremB biosynthesis. LtmG catalyzes a series of iterative condensations of isopentenyl diphosphate (IPP) with dimethylallyl diphosphate (DMAPP), geranyl diphosphate (GPP), and farnesyl diphosphate (FPP), to form GGPP. GGPP then condenses with indole-3-glycerol phosphate to form 3-geranylgeranylindole, an acyclic intermediate, to be incorporated into paxilline. Either ltmG or ltmC could be responsible for this step, as both are putative prenyl transferases. The FAD-dependent monooxygenase ltmM then catalyzes the epoxidation of the two terminal alkenes of the geranylgeranyl moiety, which is subsequently cyclized by ltmB, to paspaline. The cytochrome P450 monooxygenases ltmQ and ltmP can sequentially oxidize paspaline to terpendole E and terpendole F. Alternatively, ltmP converts paspaline to an intermediate which is oxidized by ltmQ to terpendole F. LtmF, ltmK, ltmE and ltmJ appear to be unique to the epichloe endophytes. The prenyltransferase ltmF is involved in the 27-hydroxyl-O-prenylation. The cytochrome P450 monooxygenase ltmK is required for the oxidative acetal ring formation. The multi-functional prenyltransferase ltmE is required for C20- and C21-prenylations of the indole ring of paspalanes and acts together with the cytochrome P450 monooxygenase ltmJ to yield lolitremanes by multiple oxidations and ring closures. The stereoisomer pairs of lolitriol and lolitrem N or lolitrem B and lolitrem F may be attributed to variations in the way in which ring closure can occur under the action of ltmJ. While the major product of this pathway is lolitrem B, the prenyl transferases and cytochrome P450 monooxygenases identified in this pathway have a remarkable versatility in their regio- and stereo-specificities to generate a diverse range of metabolites that are products of a metabolic grid rather than a linear pathway. In Epichloe festucae var. lolii (Neotyphodium lolii), this protein is FAD-dependent monooxygenase ltmM (ltmM).